The sequence spans 246 residues: UDP-N-acetyl-D-mannosaminuronic acid transferase (246 aa).

It belongs to the glycosyltransferase 26 family.

It carries out the reaction UDP-N-acetyl-alpha-D-mannosaminouronate + N-acetyl-alpha-D-glucosaminyl-di-trans,octa-cis-undecaprenyl diphosphate = beta-D-ManNAcA-(1-&gt;4)-alpha-D-GlcNAc-di-trans,octa-cis-undecaprenyl diphosphate + UDP + H(+). The protein operates within bacterial outer membrane biogenesis; enterobacterial common antigen biosynthesis. In terms of biological role, catalyzes the synthesis of Und-PP-GlcNAc-ManNAcA (Lipid II), the second lipid-linked intermediate involved in enterobacterial common antigen (ECA) synthesis. This Yersinia pseudotuberculosis serotype IB (strain PB1/+) protein is UDP-N-acetyl-D-mannosaminuronic acid transferase.